We begin with the raw amino-acid sequence, 183 residues long: UPF0397 protein EF_2154 (183 aa).

The next 5 helical transmembrane spans lie at 10–30 (IVAI…VVIP), 44–64 (FLAL…GLIG), 74–94 (GSAW…FGFA), 115–135 (IFQA…LDIL), and 147–167 (QGVF…TLLM).

It belongs to the UPF0397 family.

It is found in the cell membrane. This is UPF0397 protein EF_2154 from Enterococcus faecalis (strain ATCC 700802 / V583).